A 112-amino-acid polypeptide reads, in one-letter code: Ribonuclease P protein component (112 aa).

Belongs to the RnpA family. Consists of a catalytic RNA component (M1 or rnpB) and a protein subunit.

It catalyses the reaction Endonucleolytic cleavage of RNA, removing 5'-extranucleotides from tRNA precursor.. In terms of biological role, RNaseP catalyzes the removal of the 5'-leader sequence from pre-tRNA to produce the mature 5'-terminus. It can also cleave other RNA substrates such as 4.5S RNA. The protein component plays an auxiliary but essential role in vivo by binding to the 5'-leader sequence and broadening the substrate specificity of the ribozyme. The polypeptide is Ribonuclease P protein component (Mycoplasma mobile (strain ATCC 43663 / 163K / NCTC 11711) (Mesomycoplasma mobile)).